The chain runs to 297 residues: Ribosomal RNA small subunit methyltransferase H (297 aa).

S-adenosyl-L-methionine contacts are provided by residues 37–39 (GGH), Asp-56, Phe-87, Asp-102, and His-109.

The protein belongs to the methyltransferase superfamily. RsmH family.

It localises to the cytoplasm. It catalyses the reaction cytidine(1402) in 16S rRNA + S-adenosyl-L-methionine = N(4)-methylcytidine(1402) in 16S rRNA + S-adenosyl-L-homocysteine + H(+). Specifically methylates the N4 position of cytidine in position 1402 (C1402) of 16S rRNA. The chain is Ribosomal RNA small subunit methyltransferase H from Borrelia turicatae (strain 91E135).